A 314-amino-acid chain; its full sequence is Acetylglutamate kinase (314 aa).

Substrate-binding positions include 76–77, R98, and N199; that span reads GG.

Belongs to the acetylglutamate kinase family. ArgB subfamily.

It localises to the cytoplasm. The enzyme catalyses N-acetyl-L-glutamate + ATP = N-acetyl-L-glutamyl 5-phosphate + ADP. Its pathway is amino-acid biosynthesis; L-arginine biosynthesis; N(2)-acetyl-L-ornithine from L-glutamate: step 2/4. In terms of biological role, catalyzes the ATP-dependent phosphorylation of N-acetyl-L-glutamate. The chain is Acetylglutamate kinase from Bifidobacterium longum (strain DJO10A).